The primary structure comprises 628 residues: Kinesin-like protein subito (628 aa).

Residues Arg28–Ala68 form a disordered region. The span at Gln44–Glu58 shows a compositional bias: acidic residues. Positions Gly87–Ile479 constitute a Kinesin motor domain. Residue Gly169–Thr176 participates in ATP binding. Residues Asp509–Ser612 are a coiled coil. The tract at residues Lys596–Asp628 is disordered. At Ser607 the chain carries Phosphoserine. Thr609 is modified (phosphothreonine). Ser612 carries the post-translational modification Phosphoserine.

The protein belongs to the TRAFAC class myosin-kinesin ATPase superfamily. Kinesin family.

The protein localises to the cytoplasm. The protein resides in the cytoskeleton. Its function is as follows. Required during female meiosis for bipolar spindle formation in the absence of the centrosomes and chromosome homolog segregation. Also has roles in male meiosis and mitotic divisions of the early embryo. In Drosophila melanogaster (Fruit fly), this protein is Kinesin-like protein subito (sub).